Here is a 737-residue protein sequence, read N- to C-terminus: Aryl hydrocarbon receptor nuclear translocator 2 (737 aa).

The tract at residues M1–G73 is disordered. Positions S64–G73 are enriched in basic and acidic residues. Residues Y78–M131 enclose the bHLH domain. PAS domains lie at T149 to M221 and S340 to K406. The PAC domain occupies S413 to L456. 2 disordered regions span residues M525–S556 and Q588–Y721. Composition is skewed to polar residues over residues P528–P543 and Q588–D626. Positions P627 to S642 are enriched in low complexity. Positions G643–F656 are enriched in polar residues. The span at S659–Q688 shows a compositional bias: low complexity.

As to quaternary structure, efficient DNA binding requires dimerization with another bHLH protein. Heterodimer with the aryl hydrocarbon receptor (AHR), SIM1 or HIF2A/EPAS-1. In terms of tissue distribution, isoform 1 and isoform 2 are most highly expressed in the brain, eye and skeletal muscle and to a lower degree in liver, heart, kidney and swim bladder. Isoform 3 is most highly expressed in the eye, forebrain, midbrain, hindbrain, skeletal muscle, gills and brain but is barely detectable in liver, heart, kidney and swim bladder. Before the pharyngula period isoform 3 is expressed throughout the entire embryo and during this period extensively in the brain and eye.

It localises to the nucleus. In terms of biological role, transcription factor that plays a role in the development of the hypothalamo-pituitary axis. Specifically recognizes the xenobiotic response element (XRE). Isoform 1 acts as a transcriptional activator. Isoform 3 acts as a transcriptional repressor. The protein is Aryl hydrocarbon receptor nuclear translocator 2 of Danio rerio (Zebrafish).